The sequence spans 698 residues: Topoisomerase subunit TopoN (698 aa).

An Isoglutamyl lysine isopeptide (Lys-Gln) (interchain with Q-Cter in protein Pup) cross-link involves residue Lys-429. The segment at 443-473 (GAKARARAASKAKGLGTNLSLPPKLLPSRES) is disordered. The region spanning 479–593 (AELFLCEGDS…AGMVYVTMPP (115 aa)) is the Toprim domain.

The protein belongs to the type II topoisomerase family. As to quaternary structure, a complex of TopoN and TopoM, possibly a heterotetramer. Requires Mg(2+) as cofactor.

The enzyme catalyses ATP-dependent breakage, passage and rejoining of double-stranded DNA.. Its activity is regulated as follows. Inhibited by quinolone antibiotic ciprofloxacin and coumarin antibiotic novobiocin, but at much higher concentrations than is usual for DNA gyrase/topoisomerase. Catalyzes the relaxation of negatively supercoiled DNA in the presence of ATP or dATP but not other nucleotides. Individual subunits have no activity. Not able to negatively supercoil DNA, it can however introduce positive supercoils in DNA. Relaxes positive supercoils in an ATP-dependent manner. Catenates and decatenates DNA. Generates dsDNA breaks in the presence of the quinolone antibiotic ciprofloxacin, showing it is a topoisomerase. This chain is Topoisomerase subunit TopoN, found in Mycolicibacterium smegmatis (strain ATCC 700084 / mc(2)155) (Mycobacterium smegmatis).